The chain runs to 435 residues: 3-phosphoshikimate 1-carboxyvinyltransferase (435 aa).

3-phosphoshikimate-binding residues include Lys-22, Ser-23, and Arg-27. Position 22 (Lys-22) interacts with phosphoenolpyruvate. Phosphoenolpyruvate is bound by residues Gly-95 and Arg-123. Ser-168, Gln-170, Asp-319, and Lys-346 together coordinate 3-phosphoshikimate. Phosphoenolpyruvate is bound at residue Gln-170. The active-site Proton acceptor is Asp-319. Arg-350 and Arg-393 together coordinate phosphoenolpyruvate.

This sequence belongs to the EPSP synthase family. In terms of assembly, monomer.

It is found in the cytoplasm. It carries out the reaction 3-phosphoshikimate + phosphoenolpyruvate = 5-O-(1-carboxyvinyl)-3-phosphoshikimate + phosphate. Its pathway is metabolic intermediate biosynthesis; chorismate biosynthesis; chorismate from D-erythrose 4-phosphate and phosphoenolpyruvate: step 6/7. Functionally, catalyzes the transfer of the enolpyruvyl moiety of phosphoenolpyruvate (PEP) to the 5-hydroxyl of shikimate-3-phosphate (S3P) to produce enolpyruvyl shikimate-3-phosphate and inorganic phosphate. The sequence is that of 3-phosphoshikimate 1-carboxyvinyltransferase from Chloroflexus aggregans (strain MD-66 / DSM 9485).